Reading from the N-terminus, the 633-residue chain is Phosphomethylpyrimidine synthase (633 aa).

Substrate contacts are provided by residues Asn-245, Met-274, Tyr-303, His-339, 359-361 (SRG), 400-403 (DGLR), and Glu-439. His-443 serves as a coordination point for Zn(2+). Position 466 (Tyr-466) interacts with substrate. A Zn(2+)-binding site is contributed by His-507. The [4Fe-4S] cluster site is built by Cys-587, Cys-590, and Cys-595.

The protein belongs to the ThiC family. In terms of assembly, homodimer. It depends on [4Fe-4S] cluster as a cofactor.

It carries out the reaction 5-amino-1-(5-phospho-beta-D-ribosyl)imidazole + S-adenosyl-L-methionine = 4-amino-2-methyl-5-(phosphooxymethyl)pyrimidine + CO + 5'-deoxyadenosine + formate + L-methionine + 3 H(+). It functions in the pathway cofactor biosynthesis; thiamine diphosphate biosynthesis. Functionally, catalyzes the synthesis of the hydroxymethylpyrimidine phosphate (HMP-P) moiety of thiamine from aminoimidazole ribotide (AIR) in a radical S-adenosyl-L-methionine (SAM)-dependent reaction. The chain is Phosphomethylpyrimidine synthase from Neisseria meningitidis serogroup C / serotype 2a (strain ATCC 700532 / DSM 15464 / FAM18).